Reading from the N-terminus, the 430-residue chain is Lipoyl synthase, mitochondrial (430 aa).

The transit peptide at 1–37 (MATSAGKLRTLYSAHSSLSSLPPSARPTLQLATLRSY) directs the protein to the mitochondrion. Positions 39–55 (TTTPHDSPIGNTSNTPP) are enriched in polar residues. Residues 39–59 (TTTPHDSPIGNTSNTPPTVKR) are disordered. [4Fe-4S] cluster contacts are provided by Cys141, Cys146, Cys152, Cys172, Cys176, Cys179, and Ser387. The region spanning 155 to 376 (GSSKSAATAT…KERALEMGFL (222 aa)) is the Radical SAM core domain.

Belongs to the radical SAM superfamily. Lipoyl synthase family. [4Fe-4S] cluster serves as cofactor.

It localises to the mitochondrion. The catalysed reaction is [[Fe-S] cluster scaffold protein carrying a second [4Fe-4S](2+) cluster] + N(6)-octanoyl-L-lysyl-[protein] + 2 oxidized [2Fe-2S]-[ferredoxin] + 2 S-adenosyl-L-methionine + 4 H(+) = [[Fe-S] cluster scaffold protein] + N(6)-[(R)-dihydrolipoyl]-L-lysyl-[protein] + 4 Fe(3+) + 2 hydrogen sulfide + 2 5'-deoxyadenosine + 2 L-methionine + 2 reduced [2Fe-2S]-[ferredoxin]. It participates in protein modification; protein lipoylation via endogenous pathway; protein N(6)-(lipoyl)lysine from octanoyl-[acyl-carrier-protein]: step 2/2. Catalyzes the radical-mediated insertion of two sulfur atoms into the C-6 and C-8 positions of the octanoyl moiety bound to the lipoyl domains of lipoate-dependent enzymes, thereby converting the octanoylated domains into lipoylated derivatives. The chain is Lipoyl synthase, mitochondrial from Ajellomyces capsulatus (strain H143) (Darling's disease fungus).